Reading from the N-terminus, the 490-residue chain is Betaine aldehyde dehydrogenase (490 aa).

The K(+) site is built by Ile-27 and Asp-93. Residue Gly-150–Trp-152 participates in NAD(+) binding. Lys-162 serves as the catalytic Charge relay system. An NAD(+)-binding site is contributed by Lys-176 to Glu-179. Val-180 contacts K(+). Gly-230–Thr-233 serves as a coordination point for NAD(+). Residue Leu-246 participates in K(+) binding. Catalysis depends on Glu-252, which acts as the Proton acceptor. Residues Gly-254, Cys-286, and Glu-387 each contribute to the NAD(+) site. Cys-286 acts as the Nucleophile in catalysis. Position 286 is a cysteine sulfenic acid (-SOH) (Cys-286). Positions 457 and 460 each coordinate K(+). The active-site Charge relay system is Glu-464.

It belongs to the aldehyde dehydrogenase family. As to quaternary structure, dimer of dimers. K(+) serves as cofactor.

It catalyses the reaction betaine aldehyde + NAD(+) + H2O = glycine betaine + NADH + 2 H(+). It participates in amine and polyamine biosynthesis; betaine biosynthesis via choline pathway; betaine from betaine aldehyde: step 1/1. Involved in the biosynthesis of the osmoprotectant glycine betaine. Catalyzes the irreversible oxidation of betaine aldehyde to the corresponding acid. The chain is Betaine aldehyde dehydrogenase from Pseudomonas putida (strain W619).